A 249-amino-acid polypeptide reads, in one-letter code: Protein ZPS1 (249 aa).

Residues 1–20 (MKFSSGKSIIFATIASLALS) form the signal peptide. N-linked (GlcNAc...) asparagine glycosylation is found at Asn28, Asn57, Asn98, and Asn217.

Belongs to the ZPS1 family.

In Saccharomyces cerevisiae (strain ATCC 204508 / S288c) (Baker's yeast), this protein is Protein ZPS1 (ZPS1).